The primary structure comprises 162 residues: Dihydrofolate reductase (162 aa).

A DHFR domain is found at 3-161; that stretch reads KITIIAACAE…VAYTFVHYLG (159 aa). 7–9 contributes to the substrate binding site; sequence IAA. NADP(+) contacts are provided by residues 8–9 and 16–21; these read AA and IGAGNA. Substrate is bound at residue Asp29. NADP(+) is bound at residue 45–48; it reads GRKT. Arg60 contributes to the substrate binding site. NADP(+) contacts are provided by residues 65–68 and 98–103; these read ISRQ and MGGAQI. Thr117 contributes to the substrate binding site.

This sequence belongs to the dihydrofolate reductase family.

The enzyme catalyses (6S)-5,6,7,8-tetrahydrofolate + NADP(+) = 7,8-dihydrofolate + NADPH + H(+). Its pathway is cofactor biosynthesis; tetrahydrofolate biosynthesis; 5,6,7,8-tetrahydrofolate from 7,8-dihydrofolate: step 1/1. In terms of biological role, key enzyme in folate metabolism. Catalyzes an essential reaction for de novo glycine and purine synthesis, and for DNA precursor synthesis. The protein is Dihydrofolate reductase (folA) of Neisseria gonorrhoeae.